Here is a 215-residue protein sequence, read N- to C-terminus: Histone-like protein 18C (215 aa).

The disordered stretch occupies residues 140–215 (CTPRKENKCS…PKSSKPKCSM (76 aa)). Composition is skewed to basic residues over residues 149–190 (SKPR…RPRK) and 197–215 (AKAK…KCSM).

In terms of biological role, not known. Encoded in the intron of cAMP-dependent protein kinase regulatory chain type I. This is Histone-like protein 18C (Mst77F) from Drosophila melanogaster (Fruit fly).